The sequence spans 779 residues: MQQALELALDRAEYVIESARQRPPKRKYLSSGRKSVFQKLYDLYIEECEKEPEVKKLRRNVNLLEKLVMQETLSCLVVNLYPGNEGYSLMLRGKNGSDSETIRLPYEEGELLEYLDAEELPPILVDLLEKSQVNIFHCGCVIAEIRDYRQSSNMKSPGYQSRHILLRPTMQTLICDVHSITSDNHKWTQEDKLLLESQLILATAEPLCLDPSIAVTCTANRLLYNKQKMNTRPMKRCFKRYSRSSLNRQQDLSHCPPPPQLRLLDFLQKRKERKAGQHYDLKISKAGNCVDMWKRSPCNLAIPSEVDVEKYAKVEKSIKSDDSQPTVWPAHDVKDDYVFECEAGTQYQKTKLTILQSLGDPLYYGKIQPCKADEESDSQMSPSHSSTDDHSNWFIIGSKTDAERVVNQYQELVQNEAKCPVKMSHSSSGSASLSQVSPGKETDQTETVSVQSSVLGKGVKHRPPPIKLPSSSGNSSSGNYFTPQQTSSFLKSPTPPPSSKPSSIPRKSSVDLNQVSMLSPAALSPASSSQRTTATQVMANSAGLNFINVVGSVCGAQALMSGSNPMLGCNTGAITPAGINLSGLLPSGGLLPNALPSAMQAASQAGVPFGLKNTSSLRPLNLLQLPGGSLIFNTLQQQQQQLSQFTPQQPQQPTTCSPQQPGEQGSEQGSTSQEQALSAQQAAVINLTGVGSFMQSQAAVLSQLGSAENRPEQSLPQQRFQLSSAFQQQQQQIQQLRFLQHQMAMAAAAAQTAQLHHHRHTGSQSKSKMKRGTPTTPKF.

Serine 296 is subject to Phosphoserine. 2 disordered regions span residues 373-392 (DEES…DHSN) and 420-507 (PVKM…IPRK). Residues 424-437 (SHSSSGSASLSQVS) are compositionally biased toward low complexity. Polar residues predominate over residues 445-454 (TETVSVQSSV). A compositionally biased stretch (low complexity) spans 470 to 479 (SSSGNSSSGN). Threonine 494 is modified (phosphothreonine). Phosphoserine occurs at positions 519 and 524. 2 disordered regions span residues 641–677 (QLSQ…EQAL) and 755–779 (LHHH…TPKF). The segment covering 755–771 (LHHHRHTGSQSKSKMKR) has biased composition (basic residues).

The protein belongs to the SPT20 family. As to quaternary structure, interacts with MAPK14. Interacts with ATG9A. In terms of tissue distribution, highly expressed in testis, moderately in brain and pituitary gland. Expressed in several fetal tissues, including lung, brain, thymus and kidney. Expression is down-regulated in malignant prostate tissues.

Its subcellular location is the nucleus. In terms of biological role, required for MAP kinase p38 (MAPK11, MAPK12, MAPK13 and/or MAPK14) activation during gastrulation. Required for down-regulation of E-cadherin during gastrulation by regulating E-cadherin protein level downstream from NCK-interacting kinase (NIK) and independently of the regulation of transcription by FGF signaling and Snail. Required for starvation-induced ATG9A trafficking during autophagy. The chain is Transcription factor SPT20 homolog (SUPT20H) from Homo sapiens (Human).